We begin with the raw amino-acid sequence, 333 residues long: 4-hydroxy-2-oxovalerate aldolase (333 aa).

A Pyruvate carboxyltransferase domain is found at Val4–Met254. Arg12–Asp13 lines the substrate pocket. Asp13 provides a ligand contact to Mn(2+). His16 (proton acceptor) is an active-site residue. His193 contacts substrate. Mn(2+)-binding residues include His193 and His195. Tyr284 is a binding site for substrate.

This sequence belongs to the 4-hydroxy-2-oxovalerate aldolase family.

The enzyme catalyses (S)-4-hydroxy-2-oxopentanoate = acetaldehyde + pyruvate. This Desulfitobacterium hafniense (strain DSM 10664 / DCB-2) protein is 4-hydroxy-2-oxovalerate aldolase.